The primary structure comprises 54 residues: Ovomucoid (54 aa).

The Kazal-like domain occupies 4–54 (VDCSDYPTHGCTLELKPICGSDNQTYSNKCGFCNAVAQSNGTLTLSHFGKC). 3 disulfides stabilise this stretch: Cys-6/Cys-36, Cys-14/Cys-33, and Cys-22/Cys-54. A glycan (N-linked (GlcNAc...) asparagine) is linked at Asn-43.

The protein localises to the secreted. The protein is Ovomucoid of Aepypodius arfakianus (Wattled brush turkey).